A 306-amino-acid polypeptide reads, in one-letter code: Pantothenate kinase (306 aa).

Gly-91–Ser-98 lines the ATP pocket.

Belongs to the prokaryotic pantothenate kinase family.

It localises to the cytoplasm. It carries out the reaction (R)-pantothenate + ATP = (R)-4'-phosphopantothenate + ADP + H(+). Its pathway is cofactor biosynthesis; coenzyme A biosynthesis; CoA from (R)-pantothenate: step 1/5. In Streptococcus gordonii (strain Challis / ATCC 35105 / BCRC 15272 / CH1 / DL1 / V288), this protein is Pantothenate kinase.